The chain runs to 283 residues: MFS-type transporter eupM (283 aa).

7 helical membrane-spanning segments follow: residues 68–88 (LVAW…WGAM), 111–131 (IAWI…VAGP), 136–156 (GGFK…YMML), 165–185 (VLLA…TPMI), 196–216 (IGLA…VYPI), 227–247 (FAWT…IPII), and 263–283 (LIDL…ATMI).

It belongs to the major facilitator superfamily. Monocarboxylate porter (TC 2.A.1.13) family.

It localises to the membrane. Functionally, MFS-type transporter; part of the gene cluster that mediates the biosynthesis of eupenifeldin, a bistropolone meroterpenoid that acts as an antitumor agent. The protein is MFS-type transporter eupM of Phoma sp.